The sequence spans 396 residues: Tryptophan synthase beta chain (396 aa).

An N6-(pyridoxal phosphate)lysine modification is found at K86.

The protein belongs to the TrpB family. As to quaternary structure, tetramer of two alpha and two beta chains. Pyridoxal 5'-phosphate serves as cofactor.

The catalysed reaction is (1S,2R)-1-C-(indol-3-yl)glycerol 3-phosphate + L-serine = D-glyceraldehyde 3-phosphate + L-tryptophan + H2O. The protein operates within amino-acid biosynthesis; L-tryptophan biosynthesis; L-tryptophan from chorismate: step 5/5. The beta subunit is responsible for the synthesis of L-tryptophan from indole and L-serine. The sequence is that of Tryptophan synthase beta chain from Pectobacterium atrosepticum (strain SCRI 1043 / ATCC BAA-672) (Erwinia carotovora subsp. atroseptica).